The chain runs to 333 residues: L-lactate dehydrogenase B chain (333 aa).

NAD(+) is bound by residues 29–57 (GQVG…WEDK) and Arg99. Residues Arg106, Asn138, and Arg169 each coordinate substrate. Residue Asn138 coordinates NAD(+). The Proton acceptor role is filled by His193. Thr248 contacts substrate.

It belongs to the LDH/MDH superfamily. LDH family. Homotetramer.

It localises to the cytoplasm. The enzyme catalyses (S)-lactate + NAD(+) = pyruvate + NADH + H(+). Its pathway is fermentation; pyruvate fermentation to lactate; (S)-lactate from pyruvate: step 1/1. Its function is as follows. Interconverts simultaneously and stereospecifically pyruvate and lactate with concomitant interconversion of NADH and NAD(+). The polypeptide is L-lactate dehydrogenase B chain (LDHB) (Trachemys scripta elegans (Red-eared slider turtle)).